Reading from the N-terminus, the 135-residue chain is Protein PilG (135 aa).

The 117-residue stretch at K9 to V125 folds into the Response regulatory domain. A 4-aspartylphosphate modification is found at D58.

Post-translationally, phosphorylated.

Plays an essential role in both cAMP-dependent and independent regulation of twitching motility. Regulates the cAMP-independent coordination of type IV pilus (T4P) biogenesis and retraction that plays a role in surface and host cell adhesion, colonization, biofilm maturation, virulence, and twitching. In addition, phosphorylated PilG is necessary for cAMP production via regulation of the adenylate cyclase CyaB. Acts therefore as a response regulator of the chemosensory system/Chp system. The chain is Protein PilG (pilG) from Pseudomonas aeruginosa (strain ATCC 15692 / DSM 22644 / CIP 104116 / JCM 14847 / LMG 12228 / 1C / PRS 101 / PAO1).